Here is a 171-residue protein sequence, read N- to C-terminus: Large ribosomal subunit protein bL9 (171 aa).

This sequence belongs to the bacterial ribosomal protein bL9 family.

Binds to the 23S rRNA. The polypeptide is Large ribosomal subunit protein bL9 (Orientia tsutsugamushi (strain Ikeda) (Rickettsia tsutsugamushi)).